Here is a 309-residue protein sequence, read N- to C-terminus: Dihydroorotate dehydrogenase B (NAD(+)), catalytic subunit (309 aa).

Residues S21 and 45–46 (KA) each bind FMN. Residues K45 and 69–73 (NAIGL) each bind substrate. Residues N99 and N127 each contribute to the FMN site. Residue N127 coordinates substrate. Residue C130 is the Nucleophile of the active site. FMN contacts are provided by K165 and I191. Residue 192-193 (NT) coordinates substrate. FMN-binding positions include G217, 243–244 (GG), and 265–266 (GT).

This sequence belongs to the dihydroorotate dehydrogenase family. Type 1 subfamily. Heterotetramer of 2 PyrK and 2 PyrD type B subunits. FMN is required as a cofactor.

It localises to the cytoplasm. It catalyses the reaction (S)-dihydroorotate + NAD(+) = orotate + NADH + H(+). Its pathway is pyrimidine metabolism; UMP biosynthesis via de novo pathway; orotate from (S)-dihydroorotate (NAD(+) route): step 1/1. In terms of biological role, catalyzes the conversion of dihydroorotate to orotate with NAD(+) as electron acceptor. This chain is Dihydroorotate dehydrogenase B (NAD(+)), catalytic subunit (pyrD), found in Bacillus cereus (strain B4264).